Reading from the N-terminus, the 248-residue chain is Ubiquinone biosynthesis O-methyltransferase (248 aa).

S-adenosyl-L-methionine is bound by residues Arg41, Gly72, Asp93, and Met136.

The protein belongs to the methyltransferase superfamily. UbiG/COQ3 family.

The catalysed reaction is a 3-demethylubiquinol + S-adenosyl-L-methionine = a ubiquinol + S-adenosyl-L-homocysteine + H(+). The enzyme catalyses a 3-(all-trans-polyprenyl)benzene-1,2-diol + S-adenosyl-L-methionine = a 2-methoxy-6-(all-trans-polyprenyl)phenol + S-adenosyl-L-homocysteine + H(+). It functions in the pathway cofactor biosynthesis; ubiquinone biosynthesis. Functionally, O-methyltransferase that catalyzes the 2 O-methylation steps in the ubiquinone biosynthetic pathway. This Rhizobium etli (strain ATCC 51251 / DSM 11541 / JCM 21823 / NBRC 15573 / CFN 42) protein is Ubiquinone biosynthesis O-methyltransferase.